A 443-amino-acid polypeptide reads, in one-letter code: Eukaryotic translation initiation factor 3 subunit M (443 aa).

One can recognise a PCI domain in the interval Gly-205–Ser-375. Residues Glu-413–Glu-443 form a disordered region. Residues Arg-429–Glu-443 show a composition bias toward basic and acidic residues.

This sequence belongs to the eIF-3 subunit M family. In terms of assembly, component of the eukaryotic translation initiation factor 3 (eIF-3) complex.

It is found in the cytoplasm. In terms of biological role, component of the eukaryotic translation initiation factor 3 (eIF-3) complex, which is involved in protein synthesis of a specialized repertoire of mRNAs and, together with other initiation factors, stimulates binding of mRNA and methionyl-tRNAi to the 40S ribosome. The eIF-3 complex specifically targets and initiates translation of a subset of mRNAs involved in cell proliferation. This is Eukaryotic translation initiation factor 3 subunit M from Cryptococcus neoformans var. neoformans serotype D (strain B-3501A) (Filobasidiella neoformans).